Here is a 716-residue protein sequence, read N- to C-terminus: Interleukin-31 receptor subunit alpha (716 aa).

An N-terminal signal peptide occupies residues 1–18 (MWTLALWAFSFLCKFSLA). Over 19–499 (VLPTKPENIS…TNGVRINFKT (481 aa)) the chain is Extracellular. 5 Fibronectin type-III domains span residues 23 to 115 (KPEN…IAKT), 117 to 211 (PPII…TMEE), 213 to 304 (PHVL…ILRI), 305 to 403 (PDVH…QAYA), and 408 to 502 (PLKG…TLSI). 3 N-linked (GlcNAc...) asparagine glycosylation sites follow: Asn36, Asn48, and Asn64. N-linked (GlcNAc...) asparagine glycosylation is present at Asn382. The chain crosses the membrane as a helical span at residues 500–520 (LSISVFEIVLLTSLVGGGLLL). At 521–716 (LSIKTVTFGL…NIPEHSKGEV (196 aa)) the chain is on the cytoplasmic side. 2 disordered regions span residues 622 to 641 (EYVT…FKEP) and 648 to 696 (ASED…LKNS). The segment covering 670–679 (QPSSSCQSPG) has biased composition (polar residues).

Belongs to the type I cytokine receptor family. Type 2 subfamily. Heterodimer with OSMR. Interacts with JAK1 and STAT3. N-glycosylated. As to expression, expressed in a subset of dorsal root ganglia neurons. Expressed in spinal cord and trigeminal ganglion (at protein level). Expressed in skin, testis, bone marrow and thymus.

It localises to the cell membrane. It is found in the presynaptic cell membrane. Its subcellular location is the cell projection. The protein resides in the axon. Associates with OSMR to form the interleukin-31 receptor which activates STAT3 and to a lower extent STAT1 and STAT5. May function in skin immunity. Mediates IL31-induced itch, probably in a manner dependent on cation channels TRPA1 and TRPV1. Positively regulates numbers and cycling status of immature subsets of myeloid progenitor cells in bone marrow in vivo and enhances myeloid progenitor cell survival in vitro. The sequence is that of Interleukin-31 receptor subunit alpha (Il31ra) from Mus musculus (Mouse).